The primary structure comprises 955 residues: Glycine dehydrogenase (decarboxylating) (955 aa).

Lysine 705 bears the N6-(pyridoxal phosphate)lysine mark.

This sequence belongs to the GcvP family. As to quaternary structure, the glycine cleavage system is composed of four proteins: P, T, L and H. Requires pyridoxal 5'-phosphate as cofactor.

The enzyme catalyses N(6)-[(R)-lipoyl]-L-lysyl-[glycine-cleavage complex H protein] + glycine + H(+) = N(6)-[(R)-S(8)-aminomethyldihydrolipoyl]-L-lysyl-[glycine-cleavage complex H protein] + CO2. The glycine cleavage system catalyzes the degradation of glycine. The P protein binds the alpha-amino group of glycine through its pyridoxal phosphate cofactor; CO(2) is released and the remaining methylamine moiety is then transferred to the lipoamide cofactor of the H protein. This is Glycine dehydrogenase (decarboxylating) from Aliivibrio fischeri (strain ATCC 700601 / ES114) (Vibrio fischeri).